Consider the following 621-residue polypeptide: 1-deoxy-D-xylulose-5-phosphate synthase (621 aa).

Thiamine diphosphate-binding positions include His-80 and 121 to 123; that span reads GHS. Asp-152 serves as a coordination point for Mg(2+). Thiamine diphosphate is bound by residues 153-154, Asn-181, Tyr-288, and Glu-370; that span reads GA. Residue Asn-181 coordinates Mg(2+).

The protein belongs to the transketolase family. DXPS subfamily. As to quaternary structure, homodimer. Requires Mg(2+) as cofactor. It depends on thiamine diphosphate as a cofactor.

It carries out the reaction D-glyceraldehyde 3-phosphate + pyruvate + H(+) = 1-deoxy-D-xylulose 5-phosphate + CO2. The protein operates within metabolic intermediate biosynthesis; 1-deoxy-D-xylulose 5-phosphate biosynthesis; 1-deoxy-D-xylulose 5-phosphate from D-glyceraldehyde 3-phosphate and pyruvate: step 1/1. Functionally, catalyzes the acyloin condensation reaction between C atoms 2 and 3 of pyruvate and glyceraldehyde 3-phosphate to yield 1-deoxy-D-xylulose-5-phosphate (DXP). This is 1-deoxy-D-xylulose-5-phosphate synthase from Vibrio vulnificus (strain CMCP6).